Here is a 461-residue protein sequence, read N- to C-terminus: Porin AaxA (461 aa).

An N-terminal signal peptide occupies residues 1 to 22; the sequence is MSFRSILLTALLSLSFTNTMQA.

The protein belongs to the OprB family.

Its subcellular location is the cell outer membrane. Functionally, facilitates L-arginine uptake, as part of the AaxABC system. The arginine uptake by the bacterium in the macrophage may be a virulence factor against the host innate immune response. The sequence is that of Porin AaxA (aaxA) from Chlamydia muridarum (strain MoPn / Nigg).